The following is a 350-amino-acid chain: Probable dual-specificity RNA methyltransferase RlmN (350 aa).

The active-site Proton acceptor is glutamate 98. The region spanning 104 to 334 is the Radical SAM core domain; the sequence is HTYGNSVCVS…VTVRRELGGD (231 aa). Cysteine 111 and cysteine 339 form a disulfide bridge. Residues cysteine 118, cysteine 122, and cysteine 125 each coordinate [4Fe-4S] cluster. S-adenosyl-L-methionine is bound by residues 165–166, serine 197, 220–222, and asparagine 296; these read GE and SLH. The S-methylcysteine intermediate role is filled by cysteine 339.

This sequence belongs to the radical SAM superfamily. RlmN family. Requires [4Fe-4S] cluster as cofactor.

It localises to the cytoplasm. The enzyme catalyses adenosine(2503) in 23S rRNA + 2 reduced [2Fe-2S]-[ferredoxin] + 2 S-adenosyl-L-methionine = 2-methyladenosine(2503) in 23S rRNA + 5'-deoxyadenosine + L-methionine + 2 oxidized [2Fe-2S]-[ferredoxin] + S-adenosyl-L-homocysteine. The catalysed reaction is adenosine(37) in tRNA + 2 reduced [2Fe-2S]-[ferredoxin] + 2 S-adenosyl-L-methionine = 2-methyladenosine(37) in tRNA + 5'-deoxyadenosine + L-methionine + 2 oxidized [2Fe-2S]-[ferredoxin] + S-adenosyl-L-homocysteine. Its function is as follows. Specifically methylates position 2 of adenine 2503 in 23S rRNA and position 2 of adenine 37 in tRNAs. In Desulforamulus reducens (strain ATCC BAA-1160 / DSM 100696 / MI-1) (Desulfotomaculum reducens), this protein is Probable dual-specificity RNA methyltransferase RlmN.